The primary structure comprises 312 residues: Tetraacyldisaccharide 4'-kinase (312 aa).

60–67 (IAGGSGKT) lines the ATP pocket.

It belongs to the LpxK family.

The enzyme catalyses a lipid A disaccharide + ATP = a lipid IVA + ADP + H(+). The protein operates within glycolipid biosynthesis; lipid IV(A) biosynthesis; lipid IV(A) from (3R)-3-hydroxytetradecanoyl-[acyl-carrier-protein] and UDP-N-acetyl-alpha-D-glucosamine: step 6/6. Transfers the gamma-phosphate of ATP to the 4'-position of a tetraacyldisaccharide 1-phosphate intermediate (termed DS-1-P) to form tetraacyldisaccharide 1,4'-bis-phosphate (lipid IVA). The sequence is that of Tetraacyldisaccharide 4'-kinase from Helicobacter acinonychis (strain Sheeba).